Here is a 372-residue protein sequence, read N- to C-terminus: Queuine tRNA-ribosyltransferase (372 aa).

D92 functions as the Proton acceptor in the catalytic mechanism. Substrate contacts are provided by residues 92 to 96 (DSGGF), D146, Q188, and G215. The tract at residues 246 to 252 (GIGTLRE) is RNA binding. Residue D265 is the Nucleophile of the active site. An RNA binding; important for wobble base 34 recognition region spans residues 270-274 (TRLGR). 4 residues coordinate Zn(2+): C303, C305, C308, and H334.

The protein belongs to the queuine tRNA-ribosyltransferase family. Homodimer. Within each dimer, one monomer is responsible for RNA recognition and catalysis, while the other monomer binds to the replacement base PreQ1. It depends on Zn(2+) as a cofactor.

The enzyme catalyses 7-aminomethyl-7-carbaguanine + guanosine(34) in tRNA = 7-aminomethyl-7-carbaguanosine(34) in tRNA + guanine. It participates in tRNA modification; tRNA-queuosine biosynthesis. Functionally, catalyzes the base-exchange of a guanine (G) residue with the queuine precursor 7-aminomethyl-7-deazaguanine (PreQ1) at position 34 (anticodon wobble position) in tRNAs with GU(N) anticodons (tRNA-Asp, -Asn, -His and -Tyr). Catalysis occurs through a double-displacement mechanism. The nucleophile active site attacks the C1' of nucleotide 34 to detach the guanine base from the RNA, forming a covalent enzyme-RNA intermediate. The proton acceptor active site deprotonates the incoming PreQ1, allowing a nucleophilic attack on the C1' of the ribose to form the product. After dissociation, two additional enzymatic reactions on the tRNA convert PreQ1 to queuine (Q), resulting in the hypermodified nucleoside queuosine (7-(((4,5-cis-dihydroxy-2-cyclopenten-1-yl)amino)methyl)-7-deazaguanosine). This Synechococcus sp. (strain CC9311) protein is Queuine tRNA-ribosyltransferase.